A 332-amino-acid polypeptide reads, in one-letter code: Abl interactor homolog (332 aa).

The stretch at 73 to 104 (HITSLLQLQTNEMEKLNIEIQTLTQRVRMIHD) forms a coiled coil. The segment at 152 to 332 (SDINQNGVPP…NDFPPPPPPM (181 aa)) is disordered. Over residues 164–206 (NHSNSSANLTSSSGHLAASSTSNSSTPSYQSPSYSSQPTISSG) the composition is skewed to low complexity. The segment covering 221 to 247 (APPPPSLSVPAAPPPPVMNVPPPPPTS) has biased composition (pro residues). Residues 248–257 (QRPSSVNNNA) show a composition bias toward polar residues. Positions 277 to 314 (LPPPPSFGLPPPPTLGDDFPPPPPPPVGSYDFPPPPAR) are enriched in pro residues.

It belongs to the ABI family. In terms of assembly, part of a Scar/WAVE complex containing brk1, scrA, abiA, pirA and napA. Interacts with scrA.

In terms of biological role, involved in regulation of actin and microtubule organization. Required for proper cytokinesis. The polypeptide is Abl interactor homolog (abiA) (Dictyostelium discoideum (Social amoeba)).